A 168-amino-acid chain; its full sequence is Small ribosomal subunit protein uS5 (168 aa).

The S5 DRBM domain maps to 11–74 (YSEKVVKIDR…ESAKKHLVKI (64 aa)).

This sequence belongs to the universal ribosomal protein uS5 family. Part of the 30S ribosomal subunit. Contacts proteins S4 and S8.

Its function is as follows. With S4 and S12 plays an important role in translational accuracy. Located at the back of the 30S subunit body where it stabilizes the conformation of the head with respect to the body. The sequence is that of Small ribosomal subunit protein uS5 from Leptospira interrogans serogroup Icterohaemorrhagiae serovar copenhageni (strain Fiocruz L1-130).